The following is a 570-amino-acid chain: MSEKHPGPLVVEGKLSDAERMKLESNYLRGTIVEDLNDGLTGGFKGDNFLLIRFHGMYQQDDRDIRAERAAQKLEPRHAMLLRCRLPGGVITTTQWQAIDKFAADNTIYGSIRLTNRQTFQFHGILKKNVKPVHQMLHSVGLDALATANDMNRNVLCTSNPYESQLHAEAYEWAKKISEHLLPRTRAYAEIWLDQEKVATTDEEPILGQTYLPRKFKTTVVIPPQNDIDLHANDMNFVAIAENGKLVGFNLLVGGGLSIEHGNKKTYARTASEFGYLPLEHTLAVAEAVVTTQRDWGNRTDRKNAKTKYTLERVGLETFKAEVERRAGITFEPIRPYEFTGRGDRIGWVKGIDDKWHLTLFIESGRILDYPGRPLKTGLLEIAKIHQGEFRITANQNLIIASVPESQKAKIETLARDHGLMNAVKPQRENSMACVSFPTCPLAMAEAERFLPSFTDKVEAILEKHGIPDEHIVMRVTGCPNGCGRAMLAEIGLVGKAPGRYNLHLGGNRIGSRIPRMYQENITEPDILASLDELIGRWAKEREAGEGFGDFTVRAGIIRPVLDPARDFWE.

Residues Cys434, Cys440, Cys479, and Cys483 each coordinate [4Fe-4S] cluster. Cys483 is a binding site for siroheme.

It belongs to the nitrite and sulfite reductase 4Fe-4S domain family. Alpha(8)-beta(8). The alpha component is a flavoprotein, the beta component is a hemoprotein. Requires siroheme as cofactor. [4Fe-4S] cluster is required as a cofactor.

It catalyses the reaction hydrogen sulfide + 3 NADP(+) + 3 H2O = sulfite + 3 NADPH + 4 H(+). It functions in the pathway sulfur metabolism; hydrogen sulfide biosynthesis; hydrogen sulfide from sulfite (NADPH route): step 1/1. In terms of biological role, component of the sulfite reductase complex that catalyzes the 6-electron reduction of sulfite to sulfide. This is one of several activities required for the biosynthesis of L-cysteine from sulfate. This is Sulfite reductase [NADPH] hemoprotein beta-component from Salmonella agona (strain SL483).